Here is a 102-residue protein sequence, read N- to C-terminus: Small ribosomal subunit protein uS10 (102 aa).

It belongs to the universal ribosomal protein uS10 family. As to quaternary structure, part of the 30S ribosomal subunit.

Functionally, involved in the binding of tRNA to the ribosomes. The sequence is that of Small ribosomal subunit protein uS10 from Parvibaculum lavamentivorans (strain DS-1 / DSM 13023 / NCIMB 13966).